We begin with the raw amino-acid sequence, 288 residues long: Polyisoprenoid diphosphate/phosphate phosphohydrolase PLPP6 (288 aa).

The interval 1–82 (MPSPKARSGS…STGGGGQQLP (82 aa)) is disordered. Residues 1-127 (MPSPKARSGS…EDSSWGSVRP (127 aa)) are Cytoplasmic-facing. The helical transmembrane segment at 128–148 (LMKLIEVSGHGIPWLAGAAYC) threads the bilayer. Residues 149–161 (LYKSDSPAGQEVM) lie on the Lumenal side of the membrane. A helical transmembrane segment spans residues 162-182 (LNLLMALVLDVVLVGVLKAVV). A phosphatase sequence motif I region spans residues 179-187 (KAVVRRRRP). Over 183-223 (RRRRPAHNRMDMFATFSVDSYSFPSGHATRAAMCARFLLNH) the chain is Cytoplasmic. A phosphatase sequence motif II region spans residues 206-209 (PSGH). The Proton donors role is filled by histidine 209. A helical membrane pass occupies residues 224–244 (LVLAAPLRVLVLLWATIVGFS). The interval 244–255 (SRVLLGRHNVTD) is phosphatase sequence motif III. The Lumenal portion of the chain corresponds to 245–255 (RVLLGRHNVTD). Residue histidine 251 is the Nucleophile of the active site. The chain crosses the membrane as a helical span at residues 256-276 (VAFGFFMGYWQYNLVEMLWLS). Over 277–288 (PVMLQSAIGQLH) the chain is Cytoplasmic.

The protein belongs to the PA-phosphatase related phosphoesterase family.

Its subcellular location is the endoplasmic reticulum membrane. It is found in the nucleus envelope. The protein resides in the nucleus inner membrane. The enzyme catalyses presqualene diphosphate + H2O = presqualene phosphate + phosphate + H(+). It catalyses the reaction presqualene phosphate + H2O = presqualene alcohol + phosphate. The catalysed reaction is (2E,6E)-farnesyl diphosphate + H2O = (2E,6E)-farnesyl phosphate + phosphate + H(+). It carries out the reaction (2E,6E)-farnesyl phosphate + H2O = (2E,6E)-farnesol + phosphate. The enzyme catalyses (2E,6E,10E)-geranylgeranyl diphosphate + H2O = (2E,6E,10E)-geranylgeranyl phosphate + phosphate + H(+). It catalyses the reaction (2E,6E,10E)-geranylgeranyl phosphate + H2O = (2E,6E,10E)-geranylgeraniol + phosphate. The catalysed reaction is (2E)-geranyl diphosphate + H2O = (2E)-geranyl phosphate + phosphate + H(+). It carries out the reaction (2E)-geranyl phosphate + H2O = (2E)-geraniol + phosphate. The enzyme catalyses 1,2-dihexadecanoyl-sn-glycero-3-phosphate + H2O = 1,2-dihexadecanoyl-sn-glycerol + phosphate. Magnesium-independent polyisoprenoid diphosphatase that catalyzes the sequential dephosphorylation of presqualene, farnesyl, geranyl and geranylgeranyl diphosphates. May regulate the biosynthesis of cholesterol and related sterols by dephosphorylating presqualene and farnesyl diphosphate, two key intermediates in this biosynthetic pathway. May also play a role in protein prenylation by acting on farnesyl diphosphate and its derivative geranylgeranyl diphosphate, two precursors for the addition of isoprenoid anchors to membrane proteins. Has a lower activity towards phosphatidic acid (PA), but through phosphatidic acid dephosphorylation may participate in the biosynthesis of phospholipids and triacylglycerols. May also act on ceramide-1-P, lysophosphatidic acid (LPA) and sphing-4-enine 1-phosphate/sphingosine-1-phosphate. The protein is Polyisoprenoid diphosphate/phosphate phosphohydrolase PLPP6 (plpp6) of Danio rerio (Zebrafish).